The primary structure comprises 364 residues: Protein-glutamate methylesterase/protein-glutamine glutaminase 1 (364 aa).

A Response regulatory domain is found at 6 to 123; the sequence is KVLCVDDSAL…RDGMLDYSEK (118 aa). 4-aspartylphosphate is present on Asp57. A CheB-type methylesterase domain is found at 165 to 357; sequence LVSTEKLIIV…RRIMARLASM (193 aa). Active-site residues include Ser177, His203, and Asp299.

This sequence belongs to the CheB family. Post-translationally, phosphorylated by CheA. Phosphorylation of the N-terminal regulatory domain activates the methylesterase activity.

Its subcellular location is the cytoplasm. The enzyme catalyses [protein]-L-glutamate 5-O-methyl ester + H2O = L-glutamyl-[protein] + methanol + H(+). It catalyses the reaction L-glutaminyl-[protein] + H2O = L-glutamyl-[protein] + NH4(+). Involved in chemotaxis. Part of a chemotaxis signal transduction system that modulates chemotaxis in response to various stimuli. Catalyzes the demethylation of specific methylglutamate residues introduced into the chemoreceptors (methyl-accepting chemotaxis proteins or MCP) by CheR. Also mediates the irreversible deamidation of specific glutamine residues to glutamic acid. The polypeptide is Protein-glutamate methylesterase/protein-glutamine glutaminase 1 (Burkholderia mallei (strain ATCC 23344)).